The chain runs to 231 residues: 5'-methylthioadenosine/S-adenosylhomocysteine nucleosidase (231 aa).

Glu-12 acts as the Proton acceptor in catalysis. Substrate-binding positions include Gly-78, Met-153, and 174 to 175 (ME). The Proton donor role is filled by Asp-198.

The protein belongs to the PNP/UDP phosphorylase family. MtnN subfamily.

The enzyme catalyses S-adenosyl-L-homocysteine + H2O = S-(5-deoxy-D-ribos-5-yl)-L-homocysteine + adenine. The catalysed reaction is S-methyl-5'-thioadenosine + H2O = 5-(methylsulfanyl)-D-ribose + adenine. It catalyses the reaction 5'-deoxyadenosine + H2O = 5-deoxy-D-ribose + adenine. It participates in amino-acid biosynthesis; L-methionine biosynthesis via salvage pathway; S-methyl-5-thio-alpha-D-ribose 1-phosphate from S-methyl-5'-thioadenosine (hydrolase route): step 1/2. Its function is as follows. Catalyzes the irreversible cleavage of the glycosidic bond in both 5'-methylthioadenosine (MTA) and S-adenosylhomocysteine (SAH/AdoHcy) to adenine and the corresponding thioribose, 5'-methylthioribose and S-ribosylhomocysteine, respectively. Also cleaves 5'-deoxyadenosine, a toxic by-product of radical S-adenosylmethionine (SAM) enzymes, into 5-deoxyribose and adenine. The protein is 5'-methylthioadenosine/S-adenosylhomocysteine nucleosidase of Bacillus cereus (strain G9842).